Here is an 80-residue protein sequence, read N- to C-terminus: RNA-binding protein Hfq (80 aa).

In terms of domain architecture, Sm spans 9–68 (EPFLNALRKERIPVSIYLVNGIKLQGQIDSFDQFVVLLKNTVSQMVYKHAISTIVPSRPV).

This sequence belongs to the Hfq family. As to quaternary structure, homohexamer.

RNA chaperone that binds small regulatory RNA (sRNAs) and mRNAs to facilitate mRNA translational regulation in response to envelope stress, environmental stress and changes in metabolite concentrations. Also binds with high specificity to tRNAs. The sequence is that of RNA-binding protein Hfq from Thioalkalivibrio sulfidiphilus (strain HL-EbGR7).